The sequence spans 237 residues: Phosphoribosylaminoimidazole-succinocarboxamide synthase (237 aa).

It belongs to the SAICAR synthetase family.

The catalysed reaction is 5-amino-1-(5-phospho-D-ribosyl)imidazole-4-carboxylate + L-aspartate + ATP = (2S)-2-[5-amino-1-(5-phospho-beta-D-ribosyl)imidazole-4-carboxamido]succinate + ADP + phosphate + 2 H(+). It participates in purine metabolism; IMP biosynthesis via de novo pathway; 5-amino-1-(5-phospho-D-ribosyl)imidazole-4-carboxamide from 5-amino-1-(5-phospho-D-ribosyl)imidazole-4-carboxylate: step 1/2. This chain is Phosphoribosylaminoimidazole-succinocarboxamide synthase, found in Salmonella agona (strain SL483).